A 308-amino-acid polypeptide reads, in one-letter code: Oligopeptide transport ATP-binding protein AmiF (308 aa).

Residues 6–251 form the ABC transporter domain; the sequence is VEIKDLEISF…PIHPYTQALL (246 aa). Position 42–49 (42–49) interacts with ATP; that stretch reads GESGSGKT.

The protein belongs to the ABC transporter superfamily.

It is found in the cell membrane. Functionally, part of the binding-protein-dependent transport system for oligopeptides. Probably responsible for energy coupling to the transport system. The protein is Oligopeptide transport ATP-binding protein AmiF (amiF) of Streptococcus pneumoniae serotype 4 (strain ATCC BAA-334 / TIGR4).